A 235-amino-acid polypeptide reads, in one-letter code: Ubiquinone/menaquinone biosynthesis C-methyltransferase UbiE (235 aa).

S-adenosyl-L-methionine contacts are provided by Thr-59, Asp-84, and Ser-123.

It belongs to the class I-like SAM-binding methyltransferase superfamily. MenG/UbiE family.

It catalyses the reaction a 2-demethylmenaquinol + S-adenosyl-L-methionine = a menaquinol + S-adenosyl-L-homocysteine + H(+). The enzyme catalyses a 2-methoxy-6-(all-trans-polyprenyl)benzene-1,4-diol + S-adenosyl-L-methionine = a 5-methoxy-2-methyl-3-(all-trans-polyprenyl)benzene-1,4-diol + S-adenosyl-L-homocysteine + H(+). The protein operates within quinol/quinone metabolism; menaquinone biosynthesis; menaquinol from 1,4-dihydroxy-2-naphthoate: step 2/2. Its pathway is cofactor biosynthesis; ubiquinone biosynthesis. Methyltransferase required for the conversion of demethylmenaquinol (DMKH2) to menaquinol (MKH2) and the conversion of 2-polyprenyl-6-methoxy-1,4-benzoquinol (DDMQH2) to 2-polyprenyl-3-methyl-6-methoxy-1,4-benzoquinol (DMQH2). The polypeptide is Ubiquinone/menaquinone biosynthesis C-methyltransferase UbiE (Campylobacter jejuni subsp. jejuni serotype O:2 (strain ATCC 700819 / NCTC 11168)).